The primary structure comprises 360 residues: Chorismate synthase (360 aa).

NADP(+) is bound by residues arginine 48 and arginine 54. Residues 125–127 (RSS), 246–247 (NA), glycine 286, 301–305 (KPTSS), and arginine 327 contribute to the FMN site.

This sequence belongs to the chorismate synthase family. In terms of assembly, homotetramer. The cofactor is FMNH2.

The enzyme catalyses 5-O-(1-carboxyvinyl)-3-phosphoshikimate = chorismate + phosphate. It participates in metabolic intermediate biosynthesis; chorismate biosynthesis; chorismate from D-erythrose 4-phosphate and phosphoenolpyruvate: step 7/7. Its function is as follows. Catalyzes the anti-1,4-elimination of the C-3 phosphate and the C-6 proR hydrogen from 5-enolpyruvylshikimate-3-phosphate (EPSP) to yield chorismate, which is the branch point compound that serves as the starting substrate for the three terminal pathways of aromatic amino acid biosynthesis. This reaction introduces a second double bond into the aromatic ring system. The sequence is that of Chorismate synthase from Haemophilus ducreyi (strain 35000HP / ATCC 700724).